Reading from the N-terminus, the 230-residue chain is Ribose-5-phosphate isomerase A (230 aa).

Substrate-binding positions include 32–35, 85–88, and 98–101; these read TGST, DGAD, and KGGG. Catalysis depends on glutamate 107, which acts as the Proton acceptor. Residue lysine 125 coordinates substrate.

The protein belongs to the ribose 5-phosphate isomerase family. As to quaternary structure, homodimer.

It catalyses the reaction aldehydo-D-ribose 5-phosphate = D-ribulose 5-phosphate. It functions in the pathway carbohydrate degradation; pentose phosphate pathway; D-ribose 5-phosphate from D-ribulose 5-phosphate (non-oxidative stage): step 1/1. Functionally, catalyzes the reversible conversion of ribose-5-phosphate to ribulose 5-phosphate. In Burkholderia ambifaria (strain MC40-6), this protein is Ribose-5-phosphate isomerase A.